The following is a 1640-amino-acid chain: Basal body protein 10 (1640 aa).

A homodimerization region spans residues Val11–Phe64. Positions Ala93–Leu148 form a coiled coil. The segment at Ser154–Gln185 is disordered. The span at Val174 to Pro183 shows a compositional bias: pro residues. 10 coiled-coil regions span residues Leu191–Glu232, Ile260–Thr332, Val370–Arg411, Phe461–Asp722, Ala758–Ala960, Gly1010–Glu1030, Arg1059–Glu1086, Ile1129–Ser1282, Ala1323–Asp1494, and Ala1523–Thr1557. The span at Gly1592 to Ala1618 shows a compositional bias: low complexity. Positions Gly1592 to Arg1640 are disordered. The span at Gln1619–Ser1631 shows a compositional bias: gly residues.

This sequence belongs to the CEP135/TSGA10 family. As to quaternary structure, homodimer.

It is found in the cytoplasm. The protein resides in the cytoskeleton. It localises to the microtubule organizing center. Its subcellular location is the centrosome. The protein localises to the centriole. Functionally, microtubule-binding protein essential for cytoskeletal organization (e.g. rootlet microtubule bundles) and flagellar basal body/centriole assembly. This Chlamydomonas reinhardtii (Chlamydomonas smithii) protein is Basal body protein 10.